Here is a 341-residue protein sequence, read N- to C-terminus: Platelet-activating factor receptor (341 aa).

At 1-16 the chain is on the extracellular side; it reads MEHNGSFRVDSEFRYT. N4 carries an N-linked (GlcNAc...) asparagine glycan. Residues 17–38 traverse the membrane as a helical segment; it reads LFPIVYSVIFILGVVANGYVLW. The Cytoplasmic portion of the chain corresponds to 39–54; the sequence is VFANLYPSKKLNEIKI. Residues 55-74 form a helical membrane-spanning segment; sequence FMVNLTMADLLFLITLPLWI. Over 75-91 the chain is Extracellular; that stretch reads VYYYNEGDWILPNFLCN. The cysteines at positions 90 and 173 are disulfide-linked. The chain crosses the membrane as a helical span at residues 92–113; it reads VAGCLFFINTYCSVAFLGVITY. The Cytoplasmic portion of the chain corresponds to 114 to 133; sequence NRYQAVAYPIKTAQATTRKR. Residues 134–155 form a helical membrane-spanning segment; it reads GISLSLIIWVSIVATASYFLAT. Over 156–184 the chain is Extracellular; sequence DSTNLVPNKDGSGNITRCFEHYEPYSVPI. N169 carries an N-linked (GlcNAc...) asparagine glycan. Residues 185–205 form a helical membrane-spanning segment; that stretch reads LVVHVFIAFCFFLVFFLIFYC. The Cytoplasmic segment spans residues 206–233; the sequence is NLVIIHTLLTQPMRQQRKAGVKRRALWM. Residues 234 to 254 traverse the membrane as a helical segment; that stretch reads VCTVLAVFIICFVPHHVVQLP. Residues 255–275 lie on the Extracellular side of the membrane; the sequence is WTLAELGYQTNFHQAINDAHQ. The helical transmembrane segment at 276 to 295 threads the bilayer; sequence ITLCLLSTNCVLDPVIYCFL. Residues 296-341 lie on the Cytoplasmic side of the membrane; it reads TKKFRKHLSEKFYSMRSSRKCSRATSDTCTEVIVPANQTPIVSLKN.

The protein belongs to the G-protein coupled receptor 1 family. In terms of assembly, interacts with ARRB1. In terms of tissue distribution, found in a range of organs. Expressed most strongly in spleen, followed by skeletal muscle, lung and small intestine. Expressed at moderate levels in the heart. Expressed at relatively low levels in the brain, liver and kidney.

The protein localises to the cell membrane. Its function is as follows. Receptor for platelet activating factor, a chemotactic phospholipid mediator that possesses potent inflammatory, smooth-muscle contractile and hypotensive activity. Seems to mediate its action via a G protein that activates a phosphatidylinositol-calcium second messenger system. The sequence is that of Platelet-activating factor receptor (Ptafr) from Mus musculus (Mouse).